A 185-amino-acid polypeptide reads, in one-letter code: Elongation factor P (185 aa).

Belongs to the elongation factor P family.

It localises to the cytoplasm. Its pathway is protein biosynthesis; polypeptide chain elongation. Functionally, involved in peptide bond synthesis. Stimulates efficient translation and peptide-bond synthesis on native or reconstituted 70S ribosomes in vitro. Probably functions indirectly by altering the affinity of the ribosome for aminoacyl-tRNA, thus increasing their reactivity as acceptors for peptidyl transferase. In Burkholderia multivorans (strain ATCC 17616 / 249), this protein is Elongation factor P.